Reading from the N-terminus, the 61-residue chain is uncharacterized protein (61 aa).

The N-terminal stretch at 1–30 is a signal peptide; the sequence is MDVEVANMAAKLRVRGLKLPNAIVVSTAIL.

This is an uncharacterized protein from Archaeoglobus fulgidus (strain ATCC 49558 / DSM 4304 / JCM 9628 / NBRC 100126 / VC-16).